We begin with the raw amino-acid sequence, 159 residues long: MADTVLFEFLHTEMVAELWAHDPDPGPGGQKMSLSVLEGMGFRVGQALGERLPRETLAFREELDVLKFLCKDLWVAVFQKQMDSLRTNHQGTYVLQDNSFPLLLPMASGLQYLEEAPKFLAFTCGLLRGALYTLGIESVVTASVAALPVCKFQVVIPKS.

Ser-33 bears the Phosphoserine mark.

It belongs to the TRAPP small subunits family. BET3 subfamily. As to quaternary structure, part of the multisubunit transport protein particle (TRAPP) complex. Heterodimer with TRAPPC3. The heterodimer TRAPPC3-TRAPPC6A interacts with TRAPPC2L. Interacts with TRAPPC2L.

It is found in the golgi apparatus. Its subcellular location is the cis-Golgi network. The protein resides in the endoplasmic reticulum. Its function is as follows. May play a role in vesicular transport during the biogenesis of melanosomes. This Homo sapiens (Human) protein is Trafficking protein particle complex subunit 6A.